The primary structure comprises 66 residues: Large ribosomal subunit protein bL33c (66 aa).

It belongs to the bacterial ribosomal protein bL33 family.

It is found in the plastid. It localises to the chloroplast. This is Large ribosomal subunit protein bL33c from Citrus sinensis (Sweet orange).